Reading from the N-terminus, the 762-residue chain is Polyribonucleotide nucleotidyltransferase (762 aa).

The Mg(2+) site is built by D531 and D537. The KH domain occupies 597-656; that stretch reads PRVTTIKVPVDKIGEVIGPKGKVINSITEETGAQISIEDDGTVFVGATDGPSAQAAIDKI. One can recognise an S1 motif domain in the interval 668–737; the sequence is GERFLGTVVK…KRGKISLVLV (70 aa).

The protein belongs to the polyribonucleotide nucleotidyltransferase family. Mg(2+) serves as cofactor.

The protein localises to the cytoplasm. It carries out the reaction RNA(n+1) + phosphate = RNA(n) + a ribonucleoside 5'-diphosphate. Functionally, involved in mRNA degradation. Catalyzes the phosphorolysis of single-stranded polyribonucleotides processively in the 3'- to 5'-direction. This is Polyribonucleotide nucleotidyltransferase from Mycobacterium marinum (strain ATCC BAA-535 / M).